A 612-amino-acid polypeptide reads, in one-letter code: Alpha-glycerophosphate oxidase (612 aa).

Residue 21-49 coordinates FAD; it reads DLLIIGGGITGAGVALQAAASGLDTGLIE. Residues 399–408 show a composition bias toward basic and acidic residues; it reads ETSTSEKELD. The interval 399-418 is disordered; the sequence is ETSTSEKELDPSAVSRGSSF.

This sequence belongs to the FAD-dependent glycerol-3-phosphate dehydrogenase family. Requires FAD as cofactor.

It localises to the cytoplasm. The enzyme catalyses sn-glycerol 3-phosphate + O2 = dihydroxyacetone phosphate + H2O2. In Streptococcus pyogenes serotype M6 (strain ATCC BAA-946 / MGAS10394), this protein is Alpha-glycerophosphate oxidase (glpO).